Reading from the N-terminus, the 319-residue chain is Nucleotide-binding protein Mvan_2698 (319 aa).

Positions 1–12 are enriched in basic and acidic residues; the sequence is MTEQGMHQELRE. Residues 1-26 are disordered; that stretch reads MTEQGMHQELREGAGTAGDEGGLEAA. 43-50 is a binding site for ATP; it reads GLSGAGRG. 94–97 contributes to the GTP binding site; it reads DVRS.

Belongs to the RapZ-like family.

Its function is as follows. Displays ATPase and GTPase activities. The polypeptide is Nucleotide-binding protein Mvan_2698 (Mycolicibacterium vanbaalenii (strain DSM 7251 / JCM 13017 / BCRC 16820 / KCTC 9966 / NRRL B-24157 / PYR-1) (Mycobacterium vanbaalenii)).